The primary structure comprises 173 residues: RNA pyrophosphohydrolase (173 aa).

Residues 6–149 form the Nudix hydrolase domain; it reads GFRANVGIIL…KRGVYRRALQ (144 aa). The Nudix box motif lies at 38-59; it reads GGIDRGETPMDAMYRELWEEVG.

Belongs to the Nudix hydrolase family. RppH subfamily. A divalent metal cation is required as a cofactor.

Accelerates the degradation of transcripts by removing pyrophosphate from the 5'-end of triphosphorylated RNA, leading to a more labile monophosphorylated state that can stimulate subsequent ribonuclease cleavage. This is RNA pyrophosphohydrolase from Psychrobacter arcticus (strain DSM 17307 / VKM B-2377 / 273-4).